The primary structure comprises 757 residues: Relaxin receptor 1 (757 aa).

The Extracellular portion of the chain corresponds to 1 to 409; it reads MTSGSVFFYI…ENLLASIIQR (409 aa). The LDL-receptor class A domain maps to 26–63; it reads KCSLGYFPCGNITKCLPQLLHCNGVDDCGNQADEDNCG. Intrachain disulfides connect Cys27/Cys40, Cys34/Cys53, and Cys47/Cys62. N-linked (GlcNAc...) asparagine glycosylation occurs at Asn36. Leu45, Asn48, Val50, Asp52, Asp58, and Glu59 together coordinate Ca(2+). Residues 91–127 form the LRRNT domain; the sequence is ETPECLVGSVPVQCLCQGLELDCDETNLRAVPSVSSN. An N-linked (GlcNAc...) asparagine glycan is attached at Asn127. LRR repeat units follow at residues 151–172, 175–196, 199–220, 223–244, 248–269, 272–293, 296–317, 320–341, and 344–365; these read DLQK…AFRG, SLTK…VFED, RLEW…TFYG, SLIL…PLCQ, RLHW…TFIS, NLTV…TFAP, KLDE…IFKD, ELSQ…QFDY, and KLKS…MFRP. 2 N-linked (GlcNAc...) asparagine glycosylation sites follow: Asn264 and Asn272. Residue Asn325 is glycosylated (N-linked (GlcNAc...) asparagine). Asn368 carries an N-linked (GlcNAc...) asparagine glycan. Residues 410 to 430 traverse the membrane as a helical segment; sequence VFVWVVSAVTCFGNIFVICMR. Residues 431–443 are Cytoplasmic-facing; the sequence is PYIRSENKLYAMS. Residues 444-464 form a helical membrane-spanning segment; the sequence is IISLCCADCLMGIYLFVIGGF. At 465–486 the chain is on the extracellular side; it reads DLKFRGEYNKHAQLWMESTHCQ. Cys485 and Cys563 are joined by a disulfide. Residues 487-507 form a helical membrane-spanning segment; the sequence is LVGSLAILSTEVSVLLLTFLT. Residues 508–527 lie on the Cytoplasmic side of the membrane; sequence LEKYICIVYPFRCVRPGKCR. The helical transmembrane segment at 528–548 threads the bilayer; sequence TITVLILIWITGFIVAFIPLS. Over 549-577 the chain is Extracellular; the sequence is NKEFFKNYYGTNGVCFPLHSEDTESIGAQ. A helical membrane pass occupies residues 578–598; it reads IYSVAIFLGINLAAFIIIVFS. Over 599–629 the chain is Cytoplasmic; the sequence is YGSMFYSVHQSAITATEIRNQVKKEMILAKR. A helical transmembrane segment spans residues 630–650; the sequence is FFFIVFTDALCWIPIFVVKFL. Ser651 is a topological domain (extracellular). The chain crosses the membrane as a helical span at residues 652–672; it reads LLQVEIPGTITSWVVIFILPI. At 673-757 the chain is on the cytoplasmic side; that stretch reads NSALNPILYT…SQSTRLNSYS (85 aa).

The protein belongs to the G-protein coupled receptor 1 family. In terms of assembly, interacts with C1QTNF8. Expressed in the brain, kidney, testis, placenta, uterus, ovary, adrenal, prostate, skin and heart. Not detected in spleen.

It localises to the cell membrane. Functionally, receptor for relaxins. The activity of this receptor is mediated by G proteins leading to stimulation of adenylate cyclase and an increase of cAMP. Binding of the ligand may also activate a tyrosine kinase pathway that inhibits the activity of a phosphodiesterase that degrades cAMP. The sequence is that of Relaxin receptor 1 (RXFP1) from Homo sapiens (Human).